We begin with the raw amino-acid sequence, 140 residues long: Nucleoside diphosphate kinase (140 aa).

ATP contacts are provided by K11, F59, R87, T93, R104, and N114. The active-site Pros-phosphohistidine intermediate is the H117.

This sequence belongs to the NDK family. As to quaternary structure, homotetramer. The cofactor is Mg(2+).

It localises to the cytoplasm. It carries out the reaction a 2'-deoxyribonucleoside 5'-diphosphate + ATP = a 2'-deoxyribonucleoside 5'-triphosphate + ADP. It catalyses the reaction a ribonucleoside 5'-diphosphate + ATP = a ribonucleoside 5'-triphosphate + ADP. In terms of biological role, major role in the synthesis of nucleoside triphosphates other than ATP. The ATP gamma phosphate is transferred to the NDP beta phosphate via a ping-pong mechanism, using a phosphorylated active-site intermediate. The sequence is that of Nucleoside diphosphate kinase from Gluconobacter oxydans (strain 621H) (Gluconobacter suboxydans).